We begin with the raw amino-acid sequence, 1379 residues long: DNA-directed RNA polymerase subunit beta'' (1379 aa).

Positions 220, 293, 300, and 303 each coordinate Zn(2+).

It belongs to the RNA polymerase beta' chain family. RpoC2 subfamily. In plastids the minimal PEP RNA polymerase catalytic core is composed of four subunits: alpha, beta, beta', and beta''. When a (nuclear-encoded) sigma factor is associated with the core the holoenzyme is formed, which can initiate transcription. It depends on Zn(2+) as a cofactor.

It is found in the plastid. Its subcellular location is the chloroplast. It carries out the reaction RNA(n) + a ribonucleoside 5'-triphosphate = RNA(n+1) + diphosphate. Functionally, DNA-dependent RNA polymerase catalyzes the transcription of DNA into RNA using the four ribonucleoside triphosphates as substrates. This chain is DNA-directed RNA polymerase subunit beta'', found in Olimarabidopsis pumila (Dwarf rocket).